Reading from the N-terminus, the 375-residue chain is Aminomethyltransferase (375 aa).

It belongs to the GcvT family. In terms of assembly, the glycine cleavage system is composed of four proteins: P, T, L and H.

The enzyme catalyses N(6)-[(R)-S(8)-aminomethyldihydrolipoyl]-L-lysyl-[protein] + (6S)-5,6,7,8-tetrahydrofolate = N(6)-[(R)-dihydrolipoyl]-L-lysyl-[protein] + (6R)-5,10-methylene-5,6,7,8-tetrahydrofolate + NH4(+). Functionally, the glycine cleavage system catalyzes the degradation of glycine. The chain is Aminomethyltransferase from Cupriavidus pinatubonensis (strain JMP 134 / LMG 1197) (Cupriavidus necator (strain JMP 134)).